A 348-amino-acid polypeptide reads, in one-letter code: Killer cell immunoglobulin-like receptor 2DL2 (348 aa).

The first 21 residues, 1-21, serve as a signal peptide directing secretion; it reads MSLMVVSMACVGFFLLQGAWP. The Extracellular portion of the chain corresponds to 22-245; sequence HEGVHRKPSL…SKTGNPRHLH (224 aa). Ig-like C2-type domains follow at residues 42-107 and 142-205; these read EETV…VTHS and GESV…FRDS. 2 cysteine pairs are disulfide-bonded: cysteine 49–cysteine 100 and cysteine 149–cysteine 198. N-linked (GlcNAc...) asparagine glycans are attached at residues asparagine 84, asparagine 178, and asparagine 211. Residues 246 to 264 traverse the membrane as a helical segment; the sequence is ILIGTSVVIILFILLFFLL. Over 265-348 the chain is Cytoplasmic; the sequence is HRWCSNKKNA…ESRSKVVSCP (84 aa).

This sequence belongs to the immunoglobulin superfamily.

It is found in the cell membrane. In terms of biological role, receptor on natural killer (NK) cells for HLA-Cw1, 3, 7, and 8 allotypes. Inhibits the activity of NK cells thus preventing cell lysis. This is Killer cell immunoglobulin-like receptor 2DL2 from Homo sapiens (Human).